Consider the following 101-residue polypeptide: ATP-dependent Clp protease adapter protein ClpS (101 aa).

The protein belongs to the ClpS family. In terms of assembly, binds to the N-terminal domain of the chaperone ClpA.

Involved in the modulation of the specificity of the ClpAP-mediated ATP-dependent protein degradation. This is ATP-dependent Clp protease adapter protein ClpS from Corynebacterium efficiens (strain DSM 44549 / YS-314 / AJ 12310 / JCM 11189 / NBRC 100395).